Reading from the N-terminus, the 340-residue chain is Aliphatic sulfonates import ATP-binding protein SsuB 1 (340 aa).

Residues 44 to 72 (THHHARVAAQGHARGDAQPPAGALARDDG) are disordered. In terms of domain architecture, ABC transporter spans 80–299 (VQLRGVGKRY…ARASAGFAAL (220 aa)). 112–119 (GRSGCGKS) is an ATP binding site.

Belongs to the ABC transporter superfamily. Aliphatic sulfonates importer (TC 3.A.1.17.2) family. The complex is composed of two ATP-binding proteins (SsuB), two transmembrane proteins (SsuC) and a solute-binding protein (SsuA).

The protein resides in the cell inner membrane. It carries out the reaction ATP + H2O + aliphatic sulfonate-[sulfonate-binding protein]Side 1 = ADP + phosphate + aliphatic sulfonateSide 2 + [sulfonate-binding protein]Side 1.. Functionally, part of the ABC transporter complex SsuABC involved in aliphatic sulfonates import. Responsible for energy coupling to the transport system. This is Aliphatic sulfonates import ATP-binding protein SsuB 1 from Paraburkholderia xenovorans (strain LB400).